The following is a 456-amino-acid chain: Glutamyl-tRNA reductase (456 aa).

Residues Thr49–Arg52, Ser109, Glu114–Gln116, and Gln120 contribute to the substrate site. Cys50 functions as the Nucleophile in the catalytic mechanism. An NADP(+)-binding site is contributed by Gly189 to Gly194.

The protein belongs to the glutamyl-tRNA reductase family. In terms of assembly, homodimer.

It catalyses the reaction (S)-4-amino-5-oxopentanoate + tRNA(Glu) + NADP(+) = L-glutamyl-tRNA(Glu) + NADPH + H(+). It functions in the pathway porphyrin-containing compound metabolism; protoporphyrin-IX biosynthesis; 5-aminolevulinate from L-glutamyl-tRNA(Glu): step 1/2. Its function is as follows. Catalyzes the NADPH-dependent reduction of glutamyl-tRNA(Glu) to glutamate 1-semialdehyde (GSA). This chain is Glutamyl-tRNA reductase, found in Mycolicibacterium vanbaalenii (strain DSM 7251 / JCM 13017 / BCRC 16820 / KCTC 9966 / NRRL B-24157 / PYR-1) (Mycobacterium vanbaalenii).